A 348-amino-acid chain; its full sequence is NADH-ubiquinone oxidoreductase chain 2 (348 aa).

10 helical membrane-spanning segments follow: residues 2-22 (SPYVFLIISISLFLGTSLTLF), 26-46 (WLMAWMGLEINTLAIIPMMTY), 55-75 (AAIKYFLTQATASMLVMFAII), 96-116 (VLMTLALAMKLGLAPFHFWVP), 149-169 (LNMKVLITLAFLSTMLGGWGG), 178-198 (ILAYSSIAHMGWMTIVMMINP), 199-219 (SLALLNLLIYIIATLTLFLML), 242-262 (TAILLTLLSLGGLPPLTGFMP), 276-296 (IIMATLMALSALLNLFFYMRI), and 323-343 (INIIPTLTIISSLLLPLTPLL).

The protein belongs to the complex I subunit 2 family. Core subunit of respiratory chain NADH dehydrogenase (Complex I) which is composed of 45 different subunits. Interacts with TMEM242.

It localises to the mitochondrion inner membrane. The enzyme catalyses a ubiquinone + NADH + 5 H(+)(in) = a ubiquinol + NAD(+) + 4 H(+)(out). Its function is as follows. Core subunit of the mitochondrial membrane respiratory chain NADH dehydrogenase (Complex I) that is believed to belong to the minimal assembly required for catalysis. Complex I functions in the transfer of electrons from NADH to the respiratory chain. The immediate electron acceptor for the enzyme is believed to be ubiquinone. The protein is NADH-ubiquinone oxidoreductase chain 2 of Osphranter robustus (Wallaroo).